The chain runs to 306 residues: Protoheme IX farnesyltransferase (306 aa).

The next 9 membrane-spanning stretches (helical) occupy residues 32–52, 57–77, 108–128, 129–149, 157–177, 183–203, 230–250, 252–272, and 285–305; these read VVQL…PGMP, WALM…AAAF, LLFS…WVNP, LTMW…TVIL, IVIG…AMTG, ALIL…ALAL, VFLY…YGMS, WIYL…GFRL, and FRFS…DHYL.

It belongs to the UbiA prenyltransferase family. Protoheme IX farnesyltransferase subfamily.

The protein localises to the cell inner membrane. It catalyses the reaction heme b + (2E,6E)-farnesyl diphosphate + H2O = Fe(II)-heme o + diphosphate. It participates in porphyrin-containing compound metabolism; heme O biosynthesis; heme O from protoheme: step 1/1. Converts heme B (protoheme IX) to heme O by substitution of the vinyl group on carbon 2 of heme B porphyrin ring with a hydroxyethyl farnesyl side group. The chain is Protoheme IX farnesyltransferase from Acidovorax ebreus (strain TPSY) (Diaphorobacter sp. (strain TPSY)).